The sequence spans 209 residues: Protein TIC 20-v, chloroplastic (209 aa).

The transit peptide at Met1–Leu49 directs the protein to the chloroplast. 4 consecutive transmembrane segments (helical) span residues Ile63–Ile83, Ala103–Val123, Val132–Leu152, and Thr173–Leu193.

It belongs to the Tic20 family. As to quaternary structure, part of the Tic complex. As to expression, expressed in leaves, siliques and roots.

The protein resides in the plastid. It localises to the chloroplast inner membrane. Its function is as follows. May be involved in protein precursor import into chloroplasts. Not redundant with TIC20-I, TIC20-II or TIC20-IV. This Arabidopsis thaliana (Mouse-ear cress) protein is Protein TIC 20-v, chloroplastic (TIC20-V).